The primary structure comprises 303 residues: MVKRMLEVKLFGIRFENPLILASGVVDMTPELLRRAHNEGAGGVVTKSIGKEPRKGYDNPTIVELPYGLINAMGLPNPGWEAFLNEFIDERFDFPVIVSIFGGTPEEFAFLAEKLEPVADAFELNLSCPHAKGYGMEIGQDPKNVYEVVKAVKDVTDKPVIAKLTPNVNDITKLGLAAERGGADGVSAINTVKAIAIDIYAKRPILSNKVGGYSGPGIKPIALRAVYDLAKVLDIPVIGIGGITSWRDAVEFLLAGASALQIGTAVYLRGFKVFKEISNGIIEYLKEEGFSSIRDIIGLALKV.

Residues Ser23 and 47–48 (KS) contribute to the FMN site. Substrate-binding positions include Lys47, 71 to 75 (NAMGL), and Asn125. Residue Asn125 participates in FMN binding. The Nucleophile role is filled by Cys128. Residues Lys163 and Ile189 each coordinate FMN. Position 190 to 191 (190 to 191 (NT)) interacts with substrate. FMN-binding positions include Gly215, 241–242 (GG), and 263–264 (GT).

This sequence belongs to the dihydroorotate dehydrogenase family. Type 1 subfamily. Heterotetramer of 2 PyrK and 2 PyrD type B subunits. FMN is required as a cofactor.

Its subcellular location is the cytoplasm. It carries out the reaction (S)-dihydroorotate + NAD(+) = orotate + NADH + H(+). It participates in pyrimidine metabolism; UMP biosynthesis via de novo pathway; orotate from (S)-dihydroorotate (NAD(+) route): step 1/1. Its function is as follows. Catalyzes the conversion of dihydroorotate to orotate with NAD(+) as electron acceptor. This Pyrococcus horikoshii (strain ATCC 700860 / DSM 12428 / JCM 9974 / NBRC 100139 / OT-3) protein is Dihydroorotate dehydrogenase B (NAD(+)), catalytic subunit (pyrD).